A 456-amino-acid polypeptide reads, in one-letter code: Phosphomethylpyrimidine synthase (456 aa).

Substrate is bound by residues asparagine 80, methionine 109, tyrosine 139, histidine 175, 195-197 (SRG), 236-239 (DSLR), and glutamate 275. A Zn(2+)-binding site is contributed by histidine 279. Tyrosine 302 serves as a coordination point for substrate. Residue histidine 343 participates in Zn(2+) binding. Positions 423, 426, and 431 each coordinate [4Fe-4S] cluster.

It belongs to the ThiC family. It depends on [4Fe-4S] cluster as a cofactor.

The catalysed reaction is 5-amino-1-(5-phospho-beta-D-ribosyl)imidazole + S-adenosyl-L-methionine = 4-amino-2-methyl-5-(phosphooxymethyl)pyrimidine + CO + 5'-deoxyadenosine + formate + L-methionine + 3 H(+). The protein operates within cofactor biosynthesis; thiamine diphosphate biosynthesis. Catalyzes the synthesis of the hydroxymethylpyrimidine phosphate (HMP-P) moiety of thiamine from aminoimidazole ribotide (AIR) in a radical S-adenosyl-L-methionine (SAM)-dependent reaction. The protein is Phosphomethylpyrimidine synthase of Synechococcus elongatus (strain ATCC 33912 / PCC 7942 / FACHB-805) (Anacystis nidulans R2).